An 80-amino-acid polypeptide reads, in one-letter code: Serine palmitoyltransferase small subunit A-B (80 aa).

The Cytoplasmic segment spans residues 1–21 (MKVSCEDVNGPRSSLGRAWNH). The chain crosses the membrane as a helical span at residues 22 to 38 (VSWLYYQYLLVTALYML). The Lumenal segment spans residues 39 to 43 (EPWER). Residues 44–66 (TVFNSMLVSIVGMALYTGYIFMP) traverse the membrane as a helical segment. Topologically, residues 67–80 (QHILAILHYFEIVQ) are cytoplasmic.

It belongs to the SPTSS family. SPTSSA subfamily. As to quaternary structure, component of the serine palmitoyltransferase (SPT) complex, which is composed of SPTLC1, SPTLC2 or SPTLC3 and SPTSSA or SPTSSB. The heterodimer consisting of SPTLC1 and SPTLC2/SPTLC3 forms the catalytic core of the enzyme, while SPTSSA or SPTSSB subunits determine substrate specificity. SPT also interacts with ORMDL proteins, especially ORMDL3, which negatively regulate SPT activity in the presence of ceramides.

It localises to the endoplasmic reticulum membrane. It functions in the pathway lipid metabolism; sphingolipid metabolism. Functionally, component of the serine palmitoyltransferase multisubunit enzyme (SPT) that catalyzes the initial and rate-limiting step in sphingolipid biosynthesis by condensing L-serine and activated acyl-CoA (most commonly palmitoyl-CoA) to form long-chain bases. The SPT complex is composed of SPTLC1, SPTLC2 or SPTLC3 and SPTSSA or SPTSSB. Within this complex, the heterodimer consisting of SPTLC1 and SPTLC2/SPTLC3 forms the catalytic core. Within the SPT complex, SPTSSA stimulates the catalytic activity and plays a role in substrate specificity, which depends upon the overall complex composition. The SPTLC1-SPTLC2-SPTSSA complex shows a strong preference for C16-CoA substrate, while the SPTLC1-SPTLC3-SPTSSA isozyme uses both C14-CoA and C16-CoA as substrates, with a slight preference for C14-CoA. Independently of its action as a SPT component, may be involved in MBOAT7 localization to mitochondria-associated membranes, a membrane bridge between the endoplasmic reticulum and mitochondria, may hence affect MBOAT7-catalyzed incorporation of arachidonic acid into phosphatidylinositol. The protein is Serine palmitoyltransferase small subunit A-B (sptssa-b) of Xenopus laevis (African clawed frog).